Consider the following 852-residue polypeptide: MVNFTVDEIRALMDRKRNIRNMSVIAHVDHGKSTLTDSLVSKAGIIAGSKAGETRFTDTRKDEQERCITIKSTAISLFFELEKKDLEFVKGENQFETVEVDGKKEKYNGFLINLIDSPGHVDFSSEVTAALRVTDGALVVVDCVSGVCVQTETVLRQAIAERIKPVLFMNKMDRALLELQLGAEELFQTFQRIVENINVIIATYGDDDGPMGPIMVDPSIGNVGFGSGLHGWAFTLKQFAEMYAGKFGVQVDKLMKNLWGDRFFDLKTKKWSSTQTDESKRGFCQFVLDPIFMVFDAVMNIKKDKTAALVEKLGIKLANDEKDLEGKPLMKVFMRKWLPAGDTMLQMIAFHLPSPVTAQKYRMEMLYEGPHDDEAAVAIKTCDPNGPLMMYISKMVPTSDKGRFYAFGRVFSGKVATGMKARIQGPNYVPGKKEDLYEKTIQRTILMMGRFIEPIEDIPSGNIAGLVGVDQYLVKGGTITTYKDAHNMRVMKFSVSPVVRVAVEAKNPADLPKLVEGLKRLAKSDPMVQCIFEESGEHIIAGAGELHLEICLKDLEEDHACIPLKKSDPVVSYRETVQSESNQICLSKSPNKHNRLHCTAQPMPDGLADDIEGGTVNARDEFKARAKILAEKYEYDVTEARKIWCFGPDGTGPNLLMDVTKGVQYLNEIKDSVVAGFQWATREGVLSDENMRGVRFNVHDVTLHADAIHRGGGQIIPTARRVFYASVLTAEPRLLEPVYLVEIQCPEAAVGGIYGVLNRRRGHVFEESQVTGTPMFVVKAYLPVNESFGFTADLRSNTGGQAFPQCVFDHWQVLPGDPLEAGTKPNQIVLDTRKRKGLKEGVPALDNYLDKM.

The 340-residue stretch at 17–356 (RNIRNMSVIA…MIAFHLPSPV (340 aa)) folds into the tr-type G domain. Position 26–33 (26–33 (AHVDHGKS)) interacts with GTP. Phosphothreonine occurs at positions 57 and 59. Residues 170–173 (NKMD) and 227–229 (SGL) contribute to the GTP site. Histidine 709 is subject to Diphthamide.

Belongs to the TRAFAC class translation factor GTPase superfamily. Classic translation factor GTPase family. EF-G/EF-2 subfamily. Post-translationally, phosphorylation by EF-2 kinase completely inactivates EF-2. In terms of processing, AMPylated by fic-1.

Its subcellular location is the cytoplasm. The enzyme catalyses GTP + H2O = GDP + phosphate + H(+). Functionally, catalyzes the GTP-dependent ribosomal translocation step during translation elongation. During this step, the ribosome changes from the pre-translocational (PRE) to the post-translocational (POST) state as the newly formed A-site-bound peptidyl-tRNA and P-site-bound deacylated tRNA move to the P and E sites, respectively. Catalyzes the coordinated movement of the two tRNA molecules, the mRNA and conformational changes in the ribosome. Involved in the morphogenesis of epidermal tissues. The polypeptide is Elongation factor 2 (eef-2) (Caenorhabditis elegans).